The following is a 346-amino-acid chain: Coproporphyrin III ferrochelatase (346 aa).

The Fe-coproporphyrin III site is built by Ser-52 and Tyr-121. Fe(2+)-binding residues include His-181 and Glu-264.

The protein belongs to the ferrochelatase family.

It is found in the cytoplasm. It carries out the reaction Fe-coproporphyrin III + 2 H(+) = coproporphyrin III + Fe(2+). Its pathway is porphyrin-containing compound metabolism; protoheme biosynthesis. Functionally, involved in coproporphyrin-dependent heme b biosynthesis. Catalyzes the insertion of ferrous iron into coproporphyrin III to form Fe-coproporphyrin III. This Mycobacterium sp. (strain KMS) protein is Coproporphyrin III ferrochelatase.